The chain runs to 621 residues: MKQEKKKFDAEVGKILNLMIHSLYSNKEIFMRELISNASDACDKLRYLSQSEAELVAGDSNFKITVKGDKNNGQVIIRDNGIGMNKEDLIENLGTIARSGTANFLKNLSGDSKKDNMLIGQFGVGFYSSFMVADKVTVTSRKAGEDKVYVWESEGEGEYIVSSSDREFSRGTEIALHIKKEEDSFLDHFRLKHIVKSYSDHIAVPIYFFDEGDNNEIQLNSASALWTRSKSEITEEQYKEFYKSLSYAVDDPWVTMHNKNEGAIEFTNLLFIPSSKTYDLFHPDRKRRVKLYIKRVFISDENIDLIPSYLRFLRGVVDSEDLPLNISRESLQHNNVLEKIKNAITKRVLGELKKKKEDSPDEYNNFWANFGGALKEGLCEATTDHEKLLEVCIFRSALHNKMISLDEYIKGFKEGQNTIYYLSGDNPDKLLSSPQIEGLLSKNIDVLLFTDTVDDFWVNVNSEYKGHTIKSATRSDIDVDQATSSSEEKNKDDKKSDDEYKSLTDYFKEVLGILVKDVKISKKLTSSPACLAVSEAAMDIRMERFLIEQKQIANASAKNLELNPKNKIIEKIFNDLKANNKNNEELVKLIFDQACILEGEPVADTGAFSKRLNDIVQKAIL.

The tract at residues 1–328 (MKQEKKKFDA…SEDLPLNISR (328 aa)) is a; substrate-binding. Positions 329-544 (ESLQHNNVLE…EAAMDIRMER (216 aa)) are b. Residues 478–498 (DVDQATSSSEEKNKDDKKSDD) are disordered. Basic and acidic residues predominate over residues 486–498 (SEEKNKDDKKSDD). A c region spans residues 545–621 (FLIEQKQIAN…LNDIVQKAIL (77 aa)).

The protein belongs to the heat shock protein 90 family. In terms of assembly, homodimer.

The protein localises to the cytoplasm. In terms of biological role, molecular chaperone. Has ATPase activity. This is Chaperone protein HtpG from Rickettsia bellii (strain RML369-C).